The chain runs to 345 residues: Platelet-derived growth factor C (345 aa).

An N-terminal signal peptide occupies residues 1–22; it reads MLLFGFLLLTFALVSQRQGAEA. N-linked (GlcNAc...) asparagine glycosylation is found at asparagine 25 and asparagine 55. The 118-residue stretch at 46–163 folds into the CUB domain; sequence HEKIITVSAN…PGFCIHYTLL (118 aa). 4 disulfide bridges follow: cysteine 104–cysteine 124, cysteine 250–cysteine 294, cysteine 280–cysteine 335, and cysteine 287–cysteine 337.

This sequence belongs to the PDGF/VEGF growth factor family. As to quaternary structure, homodimer; disulfide-linked. Interacts with PDGFRA homodimers, and with heterodimers formed by PDGFRA and PDGFRB. Proteolytic removal of the N-terminal CUB domain releasing the core domain is necessary for unmasking the receptor-binding epitopes of the core domain. Cleavage after basic residues in the hinge region (region connecting the CUB and growth factor domains) gives rise to the receptor-binding form.

Its subcellular location is the secreted. Its function is as follows. Growth factor that plays an essential role in the regulation of embryonic development, cell proliferation, cell migration, survival and chemotaxis. Potent mitogen and chemoattractant for cells of mesenchymal origin. Required for normal skeleton formation during embryonic development. Required for normal skin morphogenesis during embryonic development. Plays an important role in wound healing, in angiogenesis and blood vessel development. The protein is Platelet-derived growth factor C (PDGFC) of Gekko japonicus (Schlegel's Japanese gecko).